The chain runs to 192 residues: GTP cyclohydrolase 1 (192 aa).

Zn(2+) is bound by residues Cys81, His84, and Cys153.

Belongs to the GTP cyclohydrolase I family. As to quaternary structure, toroid-shaped homodecamer, composed of two pentamers of five dimers.

It carries out the reaction GTP + H2O = 7,8-dihydroneopterin 3'-triphosphate + formate + H(+). Its pathway is cofactor biosynthesis; 7,8-dihydroneopterin triphosphate biosynthesis; 7,8-dihydroneopterin triphosphate from GTP: step 1/1. The sequence is that of GTP cyclohydrolase 1 from Streptococcus mutans serotype c (strain ATCC 700610 / UA159).